The sequence spans 375 residues: Delta(12) fatty acid dehydrogenase (375 aa).

2 consecutive transmembrane segments (helical) span residues 54–74 (IIAY…PAPL) and 77–97 (LAWP…WVIG). Residues 98 to 102 (HECGH) carry the Histidine box-1 motif. The helical transmembrane segment at 110 to 130 (WVDDTVGFILHSFLMTPYFSW) threads the bilayer. The Histidine box-2 motif lies at 134 to 138 (HRNHH). 3 helical membrane passes run 172–192 (LLIM…TNIS), 218–238 (VLLS…AVAA), and 242–262 (AWVT…FDII). Residues 308 to 312 (HVMHH) carry the Histidine box-3 motif.

Belongs to the fatty acid desaturase type 1 family. Fe cation serves as cofactor. In terms of tissue distribution, seed.

The protein localises to the membrane. It catalyses the reaction a (9Z,12Z)-octadecadienoyl-containing glycerolipid + 2 Fe(II)-[cytochrome b5] + O2 + 2 H(+) = a (9Z)-octadec-9-en-12-ynoyl-containing glycerolipid + 2 Fe(III)-[cytochrome b5] + 2 H2O. It participates in lipid metabolism; polyunsaturated fatty acid biosynthesis. Changes the delta-12 double bond of linoleic acid into a triple bond in the biosynthesis of crepenynic acid. This is Delta(12) fatty acid dehydrogenase from Crepis alpina (Hawksbeard).